Consider the following 363-residue polypeptide: NAD(P)H-quinone oxidoreductase subunit 1, chloroplastic (363 aa).

Transmembrane regions (helical) follow at residues 27-47 (IWLFIPIFTPVSGITIGVLVI), 98-118 (FSIGPSVVVISILLSHLVIPF), 127-147 (LSIGVSLWIAISSIAPIGLLM), 248-268 (YSGIKFGLFYLASYLNLLVSS), 300-320 (VFGTTISIFFTLAKAYLFLFI), and 336-356 (LLNLGWKFLLPIALGNLLLTT).

Belongs to the complex I subunit 1 family. In terms of assembly, NDH is composed of at least 16 different subunits, 5 of which are encoded in the nucleus.

It is found in the plastid. The protein resides in the chloroplast thylakoid membrane. The enzyme catalyses a plastoquinone + NADH + (n+1) H(+)(in) = a plastoquinol + NAD(+) + n H(+)(out). It carries out the reaction a plastoquinone + NADPH + (n+1) H(+)(in) = a plastoquinol + NADP(+) + n H(+)(out). NDH shuttles electrons from NAD(P)H:plastoquinone, via FMN and iron-sulfur (Fe-S) centers, to quinones in the photosynthetic chain and possibly in a chloroplast respiratory chain. The immediate electron acceptor for the enzyme in this species is believed to be plastoquinone. Couples the redox reaction to proton translocation, and thus conserves the redox energy in a proton gradient. This is NAD(P)H-quinone oxidoreductase subunit 1, chloroplastic from Amborella trichopoda.